Here is a 459-residue protein sequence, read N- to C-terminus: Bifunctional protein GlmU (459 aa).

The pyrophosphorylase stretch occupies residues Met-1–Lys-229. Residues Leu-11–Gly-14, Lys-25, Gln-76, Gly-81–Thr-82, Tyr-103–Asp-105, Gly-140, Glu-154, and Asn-227 contribute to the UDP-N-acetyl-alpha-D-glucosamine site. Asp-105 contacts Mg(2+). Asn-227 lines the Mg(2+) pocket. Positions Leu-230–Asn-250 are linker. Residues Gly-251–Asn-459 form an N-acetyltransferase region. Residues Arg-333 and Lys-351 each coordinate UDP-N-acetyl-alpha-D-glucosamine. The active-site Proton acceptor is His-363. Residues Tyr-366 and Asn-377 each coordinate UDP-N-acetyl-alpha-D-glucosamine. Acetyl-CoA is bound by residues Ala-380, Asn-386–Tyr-387, Ser-405, and Ala-423.

In the N-terminal section; belongs to the N-acetylglucosamine-1-phosphate uridyltransferase family. This sequence in the C-terminal section; belongs to the transferase hexapeptide repeat family. As to quaternary structure, homotrimer. Mg(2+) is required as a cofactor.

Its subcellular location is the cytoplasm. The enzyme catalyses alpha-D-glucosamine 1-phosphate + acetyl-CoA = N-acetyl-alpha-D-glucosamine 1-phosphate + CoA + H(+). It carries out the reaction N-acetyl-alpha-D-glucosamine 1-phosphate + UTP + H(+) = UDP-N-acetyl-alpha-D-glucosamine + diphosphate. Its pathway is nucleotide-sugar biosynthesis; UDP-N-acetyl-alpha-D-glucosamine biosynthesis; N-acetyl-alpha-D-glucosamine 1-phosphate from alpha-D-glucosamine 6-phosphate (route II): step 2/2. The protein operates within nucleotide-sugar biosynthesis; UDP-N-acetyl-alpha-D-glucosamine biosynthesis; UDP-N-acetyl-alpha-D-glucosamine from N-acetyl-alpha-D-glucosamine 1-phosphate: step 1/1. It functions in the pathway bacterial outer membrane biogenesis; LPS lipid A biosynthesis. Its function is as follows. Catalyzes the last two sequential reactions in the de novo biosynthetic pathway for UDP-N-acetylglucosamine (UDP-GlcNAc). The C-terminal domain catalyzes the transfer of acetyl group from acetyl coenzyme A to glucosamine-1-phosphate (GlcN-1-P) to produce N-acetylglucosamine-1-phosphate (GlcNAc-1-P), which is converted into UDP-GlcNAc by the transfer of uridine 5-monophosphate (from uridine 5-triphosphate), a reaction catalyzed by the N-terminal domain. The protein is Bifunctional protein GlmU of Buchnera aphidicola subsp. Acyrthosiphon pisum (strain 5A).